The sequence spans 100 residues: Colipase-like protein 2 (100 aa).

The first 21 residues, 1 to 21 (MAAALALVAGVLSGAVLPLWS), serve as a signal peptide directing secretion. Intrachain disulfides connect Cys34-Cys45, Cys40-Cys56, Cys44-Cys78, Cys66-Cys86, and Cys80-Cys97.

It belongs to the colipase family.

It is found in the secreted. The polypeptide is Colipase-like protein 2 (CLPSL2) (Homo sapiens (Human)).